A 2325-amino-acid polypeptide reads, in one-letter code: Protein sidekick homolog (2325 aa).

A signal peptide spans 1-26 (MRNRLLLIFYTTTVLWTIGYTQLVLG). At 27 to 2019 (KPPIFQDGGS…IPDDPFYTTW (1993 aa)) the chain is on the extracellular side. 3 consecutive Ig-like C2-type domains span residues 28 to 105 (PPIF…AAIS), 217 to 319 (PSLQ…AYMT), and 324 to 397 (PILK…ADLA). Cystine bridges form between Cys-52–Cys-94, Cys-247–Cys-301, and Cys-345–Cys-386. A glycan (N-linked (GlcNAc...) asparagine) is linked at Asn-407. Ig-like C2-type domains are found at residues 456–544 (PSQK…VQVN) and 547–638 (SLIE…AMLQ). 2 disulfides stabilise this stretch: Cys-480–Cys-528 and Cys-568–Cys-622. Asn-632, Asn-655, Asn-807, Asn-868, Asn-932, and Asn-1016 each carry an N-linked (GlcNAc...) asparagine glycan. Fibronectin type-III domains lie at 645 to 751 (MPER…MPQQ), 756 to 853 (APRN…TSEG), 858 to 957 (APKN…TEED), 961 to 1055 (SVDE…VPPE), 1059 to 1154 (RPSM…TLQT), 1159 to 1254 (PSQR…TYES), 1259 to 1359 (SPRN…TMED), 1363 to 1457 (PPES…SSVR), 1463 to 1566 (APAP…TLPS), 1571 to 1671 (QPIS…VGYS), 1673 to 1775 (PKRN…DKPG), 1776 to 1872 (PVGI…SKDG), and 1873 to 2004 (PPPP…TEQL). Residues 1036 to 1059 (TRKGDGPVEETKFESGVPPELPGR) are disordered. A compositionally biased stretch (basic and acidic residues) spans 1037-1048 (RKGDGPVEETKF). Asn-1107 carries N-linked (GlcNAc...) asparagine glycosylation. The tract at residues 1137–1161 (KGRGAPSEPSRSFETLQTNPDTPSQ) is disordered. A compositionally biased stretch (polar residues) spans 1145–1161 (PSRSFETLQTNPDTPSQ). N-linked (GlcNAc...) asparagine glycosylation is present at Asn-1614. 2 disordered regions span residues 1857-1884 (GEQRSANVTIGPSKDGPPPPSKPQITSG) and 1918-1947 (PANGYVSQRPRRNEIKGAKSAAQTAAATST). N-linked (GlcNAc...) asparagine glycosylation is present at Asn-1863. Over residues 1935 to 1947 (AKSAAQTAAATST) the composition is skewed to low complexity. Residues 2020-2040 (WFMALVAMGAFVLIVIIIAIL) form a helical membrane-spanning segment. Residues 2041–2325 (CVTGSSAKYR…NLTTGFSSFV (285 aa)) lie on the Cytoplasmic side of the membrane. Disordered regions lie at residues 2080 to 2113 (NMTRSRELPTRPGTTQSWVSDQSREPPAYGSVLG), 2164 to 2187 (TAYVTPSARGGSDNGRNEYMPTRS), 2202 to 2226 (RGHIPSSSGGSGAGSQPQGSPLQQP), and 2285 to 2325 (ILTG…SSFV). A compositionally biased stretch (polar residues) spans 2091–2100 (PGTTQSWVSD). The segment covering 2215–2226 (GSQPQGSPLQQP) has biased composition (low complexity). Composition is skewed to polar residues over residues 2294-2305 (AGRSSTTDSTSE) and 2313-2325 (ATPNLTTGFSSFV).

Belongs to the sidekick family.

It is found in the membrane. Functionally, cell adhesion protein. The protein is Protein sidekick homolog (rig-4) of Caenorhabditis elegans.